A 266-amino-acid chain; its full sequence is NADP-dependent mannitol dehydrogenase (266 aa).

The NADP(+) site is built by T31, I33, N107, and R140. S159 (proton donor) is an active-site residue. Residues Y174, K178, I206, and T208 each contribute to the NADP(+) site. The active-site Proton acceptor is Y174. Residue K178 is the Lowers pKa of active site Tyr of the active site.

The protein belongs to the short-chain dehydrogenases/reductases (SDR) family. Homotetramer.

It is found in the vacuole. It carries out the reaction D-mannitol + NADP(+) = D-fructose + NADPH + H(+). The polypeptide is NADP-dependent mannitol dehydrogenase (Alternaria alternata (Alternaria rot fungus)).